Consider the following 795-residue polypeptide: MKFSELWLREWVNPAISSDDLAHQITMAGLEVDGVDAVAGEFNGVVVGHVVECGQHPNADKLRVTKIDVGGDRLLDIVCGAPNCRQGLKVAVATVGAVLPGDFKIKAAKLRGESSEGMLCSFSELAISDDHDGIIELPADAPIGVDVREYLHLDDKTIEISVTPNRADCLGIIGVARDVAVVNQLPLTEPDMAEVVASINDTLPIRVDAPQACPRYLGRVVKGINVKAATPLWMREKLRRCGIRSIDPVVDVTNFVLLELGQPMHAFDLDRISGGVIVRLATDGEELTLLDGTKAKLNADTLVIADHQKPLAMAGIFGGEHSGVNEETRNVLLESAFFNPLSITGRARRHGLHTDASHRYERGVDPALQHKAIERATRLLIDICGGEAGPVVDVTTASELPKQATITLRREKLDRLIGHHIPSEQVSDILRRLGCKVTECGSDWQAVAPSWRFDMAIEEDLVEEVARIYGYNNIPDVPVRADLVMTKHREASLSLKRVKTALVDRGYQEAITYSFVDPKVQALLHPQQEALILPNPISVDMSAMRLSLLTGLLSAVVYNQNRQQSRLRLFESGLRFVPDNTADLGIRQDVMLAGVIAGHRYDEHWDLARQPIDFYDLKGDLEAILELTGKLSDVQFRAEAHSALHPGQSAAIYLAGEHIGFIGVVHPELERKLDLNGRTVVFEVQWNKLADRAVPQAREISRFPANRRDIAVVVAENVPAEDILAECKKVGANQVVGVNLFDVYSGKGVAEGYKSLAISLVLQDTARTLEEEEIAATVAKCVEALKQRFQASLRD.

The 110-residue stretch at alanine 39–arginine 148 folds into the tRNA-binding domain. One can recognise a B5 domain in the interval proline 401–aspartate 476. Mg(2+)-binding residues include aspartate 454, aspartate 460, glutamate 463, and glutamate 464. The FDX-ACB domain occupies serine 701–arginine 794.

It belongs to the phenylalanyl-tRNA synthetase beta subunit family. Type 1 subfamily. Tetramer of two alpha and two beta subunits. The cofactor is Mg(2+).

It localises to the cytoplasm. The enzyme catalyses tRNA(Phe) + L-phenylalanine + ATP = L-phenylalanyl-tRNA(Phe) + AMP + diphosphate + H(+). This chain is Phenylalanine--tRNA ligase beta subunit, found in Yersinia pestis.